The primary structure comprises 345 residues: Nuclear distribution protein nudE-like 1 (345 aa).

Residues 28-190 (QSFQEARDEL…LAVRERQQEV (163 aa)) are a coiled coil. A self-association region spans residues 56-166 (VQAEQRNRDL…LDEKESLLVS (111 aa)). The interaction with KATNB1 stretch occupies residues 64–189 (DLQADNQRLK…ELAVRERQQE (126 aa)). A required for interaction with PAFAH1B1 region spans residues 114–133 (YVRELEQANDDLERAKRATI). Residues 175-345 (RDLRQELAVR…SAPGMLPLSV (171 aa)) form an interaction with CENPF region. An interaction with YWHAE region spans residues 189–256 (EVTRKSAPSS…SARISALNIV (68 aa)). Positions 191–345 (TRKSAPSSPT…SAPGMLPLSV (155 aa)) are interaction with NEFL. The interval 195–256 (APSSPTLDCE…SARISALNIV (62 aa)) is interaction with KATNA1. Ser215 is subject to Phosphoserine. At Thr219 the chain carries Phosphothreonine; by CDK1 and MAPK1. At Ser231 the chain carries Phosphoserine. Positions 241–280 (TSPLTPSARISALNIVGDLLRKVGALESKLAACRNFAKDQ) are interaction with DISC1. Ser242 is subject to Phosphoserine; by CDK1. Position 245 is a phosphothreonine; by CDK1 and MAPK1 (Thr245). The required for localization to the centrosome and interaction with dynein, dynactin, tubulin gamma, PCM1 and PCNT stretch occupies residues 256-291 (VGDLLRKVGALESKLAACRNFAKDQASRKSYISGNV). Cys273 carries the S-palmitoyl cysteine; by ZDHHC2, ZDHHC3 and ZDHHC7 lipid modification. The tract at residues 315 to 345 (GAVNGFDPAPPPPGLGSSRPSSAPGMLPLSV) is disordered. A compositionally biased stretch (low complexity) spans 329–339 (LGSSRPSSAPG). Ser344 is subject to Phosphoserine.

The protein belongs to the nudE family. As to quaternary structure, interacts with PLEKHM1 (via N- and C-terminus). Interacts with YWHAE. Interacts directly with NEFL and indirectly with NEFH. Interacts with microtubules. Self-associates. Interacts with DISC1, dynein, dynactin, tubulin gamma, KATNA1, KATNB1, PAFAH1B1, PCM1 and PCNT. Interacts (via C-terminus) with CENPF. Interacts with ZNF365. Interacts with GTP-bound RAB9A; the interaction may lead to RAB9A-dynein motor tethering. Phosphorylated in mitosis. Can be phosphorylated by CDK1, CDK5 and MAPK1. Phosphorylation by CDK5 promotes interaction with KATNA1 and YWHAE. In terms of processing, palmitoylation at Cys-273 reduces affinity for dynein. In terms of tissue distribution, expressed in brain, heart, kidney, liver, lung, pancreas, placenta and skeletal muscle.

It localises to the cytoplasm. The protein resides in the cytoskeleton. Its subcellular location is the microtubule organizing center. It is found in the centrosome. The protein localises to the chromosome. It localises to the centromere. The protein resides in the kinetochore. Its subcellular location is the spindle. Functionally, required for organization of the cellular microtubule array and microtubule anchoring at the centrosome. May regulate microtubule organization at least in part by targeting the microtubule severing protein KATNA1 to the centrosome. Also positively regulates the activity of the minus-end directed microtubule motor protein dynein. May enhance dynein-mediated microtubule sliding by targeting dynein to the microtubule plus ends. Required for several dynein- and microtubule-dependent processes such as the maintenance of Golgi integrity, the centripetal motion of secretory vesicles and the coupling of the nucleus and centrosome. Also required during brain development for the migration of newly formed neurons from the ventricular/subventricular zone toward the cortical plate. Plays a role, together with DISC1, in the regulation of neurite outgrowth. Required for mitosis in some cell types but appears to be dispensible for mitosis in cortical neuronal progenitors, which instead requires NDE1. Facilitates the polymerization of neurofilaments from the individual subunits NEFH and NEFL. Positively regulates lysosome peripheral distribution and ruffled border formation in osteoclasts. Plays a role, together with DISC1, in the regulation of neurite outgrowth. May act as a RAB9A/B effector that tethers RAB9-associated late endosomes to the dynein motor for their retrograde transport to the trans-Golgi network. This is Nuclear distribution protein nudE-like 1 (NDEL1) from Homo sapiens (Human).